A 511-amino-acid polypeptide reads, in one-letter code: Aminotransferase FGSG_17085 (511 aa).

Position 165–166 (165–166) interacts with pyridoxal 5'-phosphate; the sequence is GA. Position 200 (Tyr-200) interacts with substrate. Asp-310 is a binding site for pyridoxal 5'-phosphate. Lys-339 carries the N6-(pyridoxal phosphate)lysine modification. Gly-371 provides a ligand contact to substrate. 372-373 is a pyridoxal 5'-phosphate binding site; the sequence is HT.

The protein belongs to the class-III pyridoxal-phosphate-dependent aminotransferase family. Pyridoxal 5'-phosphate serves as cofactor.

Its pathway is secondary metabolite biosynthesis. Functionally, aminotransferase; part of the gene cluster that mediates the biosynthesis of the lipopeptide fusaristatin A. Fusaristatin A consists of a polyketide chain linked to three amino acid residues glutamine (Gln), dehydroalanine (dehydro-Ala), and beta-aminoisobutyric acid. The biosynthesis starts with formation of a linear polyketide chain by the highly reducing polyketide synthase PKS6. The gene cluster does not contain an acyl-CoA ligase or an acyl-transferase, and it is therefore predicted that the polyketide is transferred directly to the nonribosomal peptide synthetase NRPS7. Modules 1-3 from NRPS7 incorporate dehydro-Ala, Gln, and beta-aminoisobutyric acid in the compound, which is released by cyclization. The beta-aminoisobutyric acid units are most likely not freely available to the NRPS, but can be synthesized from thymine, which requires a dehydrogenase, a monooxygenase, and an aminotransferase. The fusaristatin A cluster contains a cytochrome P450 monooxygenase (FGSG_08207) and an aminotransferase (FGSG_17085), which theoretically can perform two of the enzymatic steps. The enzymes may however also be involved in biosynthesis of dehydroalanine or modification of the polyketide. The dehydro-Ala residue can be a result of cyclization, where serine is dehydrated. The last gene of the cluster encodes a protein with an A/B barrel domain found in variable enzymes, which hampers functional prediction. This is Aminotransferase FGSG_17085 from Gibberella zeae (strain ATCC MYA-4620 / CBS 123657 / FGSC 9075 / NRRL 31084 / PH-1) (Wheat head blight fungus).